Consider the following 291-residue polypeptide: 4-diphosphocytidyl-2-C-methyl-D-erythritol kinase (291 aa).

Lysine 11 is a catalytic residue. Residue 95–105 (PVAAGMAGGSS) participates in ATP binding. Aspartate 137 is an active-site residue.

The protein belongs to the GHMP kinase family. IspE subfamily.

It catalyses the reaction 4-CDP-2-C-methyl-D-erythritol + ATP = 4-CDP-2-C-methyl-D-erythritol 2-phosphate + ADP + H(+). It functions in the pathway isoprenoid biosynthesis; isopentenyl diphosphate biosynthesis via DXP pathway; isopentenyl diphosphate from 1-deoxy-D-xylulose 5-phosphate: step 3/6. In terms of biological role, catalyzes the phosphorylation of the position 2 hydroxy group of 4-diphosphocytidyl-2C-methyl-D-erythritol. The protein is 4-diphosphocytidyl-2-C-methyl-D-erythritol kinase of Lachnoclostridium phytofermentans (strain ATCC 700394 / DSM 18823 / ISDg) (Clostridium phytofermentans).